The following is a 152-amino-acid chain: Cytochrome c-type biogenesis CcmH-like mitochondrial protein (152 aa).

The Mitochondrial intermembrane segment spans residues 1-83 (MATEEDVKQR…ILYTPKFDLQ (83 aa)). Residues Cys26 and Cys29 each contribute to the heme site. A helical membrane pass occupies residues 84 to 104 (TAAIWLSPVIVGGVAAGVWAY). Over 105 to 152 (KKHRQRTNVHIMALNLVRGVPLTPREKETMLDVLTPPPPANKWWWPGK) the chain is Mitochondrial matrix.

Belongs to the CcmH/CycL/Ccl2/NrfF family.

It localises to the mitochondrion inner membrane. In terms of biological role, plays a role in mitochondrial cytochrome c maturation. Probable component of a heme lyase complex involved in the reduction of apocytochrome c. The sequence is that of Cytochrome c-type biogenesis CcmH-like mitochondrial protein from Oryza sativa subsp. indica (Rice).